An 82-amino-acid chain; its full sequence is MQNEEGQMVDLYVPRKCSATNRIITAKDHASVQINIGHVDENGLYDGRFTTFALSGFIRAQGDADSALDRLWQKRKAEVKQQ.

This sequence belongs to the eukaryotic ribosomal protein eS21 family.

The protein is Small ribosomal subunit protein eS21 (RPS21) of Oryza sativa subsp. japonica (Rice).